The primary structure comprises 294 residues: Cell division protein FtsQ (294 aa).

Topologically, residues 1 to 26 (MARGPNRRRVDRVPGERRRRLARAMA) are cytoplasmic. Residues 27–49 (LALPSILALAALGGAATLGWRVG) form a helical membrane-spanning segment. Residues 50 to 294 (WKSDLLRVRE…GPQGRSSSLR (245 aa)) are Periplasmic-facing. The region spanning 55–123 (LRVREIRFEG…PALEVQLAER (69 aa)) is the POTRA domain. The disordered stretch occupies residues 266-294 (AGRRGEPDGRSSYAAGGGGGPQGRSSSLR).

It belongs to the FtsQ/DivIB family. FtsQ subfamily.

Its subcellular location is the cell inner membrane. In terms of biological role, essential cell division protein. This Anaeromyxobacter sp. (strain K) protein is Cell division protein FtsQ.